A 59-amino-acid polypeptide reads, in one-letter code: MAKKENRVIITLECTEARKEGASPSRYTTTKNKKNQTERLVLKKYNPSLKKHTLHKEIK.

This sequence belongs to the bacterial ribosomal protein bL33 family.

This is Large ribosomal subunit protein bL33 from Prosthecochloris aestuarii (strain DSM 271 / SK 413).